The sequence spans 177 residues: Olfactory protein (177 aa).

The first 17 residues, 1 to 17 (MIRIIAIVVLFFLQCQA), serve as a signal peptide directing secretion. A disulfide bridge links cysteine 81 with cysteine 174.

Belongs to the calycin superfamily. Lipocalin family. As to expression, synthesized in Bowman glands, which secrete the mucus that bathes the cilia of the olfactory neuroepithelium.

The protein localises to the secreted. This is Olfactory protein from Lithobates pipiens (Northern leopard frog).